The sequence spans 320 residues: tRNA N6-adenosine threonylcarbamoyltransferase (320 aa).

Positions 114 and 118 each coordinate Fe cation. Substrate-binding positions include 136–140 (VVSGG), D169, G182, D186, and N273. Position 297 (D297) interacts with Fe cation.

The protein belongs to the KAE1 / TsaD family. Fe(2+) serves as cofactor.

It localises to the cytoplasm. The catalysed reaction is L-threonylcarbamoyladenylate + adenosine(37) in tRNA = N(6)-L-threonylcarbamoyladenosine(37) in tRNA + AMP + H(+). Required for the formation of a threonylcarbamoyl group on adenosine at position 37 (t(6)A37) in tRNAs that read codons beginning with adenine. Is involved in the transfer of the threonylcarbamoyl moiety of threonylcarbamoyl-AMP (TC-AMP) to the N6 group of A37, together with TsaE and TsaB. TsaD likely plays a direct catalytic role in this reaction. In Ureaplasma urealyticum serovar 10 (strain ATCC 33699 / Western), this protein is tRNA N6-adenosine threonylcarbamoyltransferase.